The chain runs to 309 residues: MRRAALWLWLCALALRLQPVLPQIVTVNVPPEDQDGSGDDSDNFSGSGTGALPDITLSRQASPTLKDVWLLTATPTAPEPTSRDAQATTTSILPAAEKPGEGEPVLTAEVDPGFTARDKESEVTTRPRETTQLLITHWVSTARATTAQAPVTSHPHRDVQPGLHETSAPTAPGQPDQQPPSGGTSVIKEVAEDGATNQLPTGEGSGEQDFTFETSGENTAVAAVEPDQRNQPPVDEGATGASQGLLDRKEVLGGVIAGGLVGLIFAVCLVGFMLYRMKKKDEGSYSLEEPKQANGGAYQKPTKQEEFYA.

Positions 1 to 22 (MRRAALWLWLCALALRLQPVLP) are cleaved as a signal peptide. The Extracellular segment spans residues 23–253 (QIVTVNVPPE…GLLDRKEVLG (231 aa)). Disordered regions lie at residues 28-57 (NVPP…DITL) and 145-185 (TTAQ…GGTS). Residues 32–42 (EDQDGSGDDSD) show a composition bias toward acidic residues. O-linked (Xyl...) (chondroitin sulfate) serine glycosylation occurs at Ser-37. A glycan (N-linked (GlcNAc...) asparagine) is linked at Asn-43. Ser-45 and Ser-47 each carry an O-linked (Xyl...) (heparan sulfate) serine glycan. The segment covering 173–183 (GQPDQQPPSGG) has biased composition (low complexity). O-linked (Xyl...) (chondroitin sulfate) serine glycosylation is found at Ser-205 and Ser-215. Residues 254-274 (GVIAGGLVGLIFAVCLVGFML) traverse the membrane as a helical segment. The Cytoplasmic portion of the chain corresponds to 275–309 (YRMKKKDEGSYSLEEPKQANGGAYQKPTKQEEFYA). The interval 283 to 309 (GSYSLEEPKQANGGAYQKPTKQEEFYA) is disordered. Position 284 is a phosphoserine (Ser-284).

This sequence belongs to the syndecan proteoglycan family. In terms of assembly, interacts with CDCP1. Interacts (via C-terminus) with TIAM1 (via PDZ domain). Interacts with MDK. In terms of processing, shedding is enhanced by a number of factors such as heparanase, thrombin or EGF. Also by stress and wound healing. PMA-mediated shedding is inhibited by TIMP3.

The protein resides in the membrane. It is found in the secreted. It localises to the extracellular exosome. Functionally, cell surface proteoglycan that contains both heparan sulfate and chondroitin sulfate and that links the cytoskeleton to the interstitial matrix. Regulates exosome biogenesis in concert with SDCBP and PDCD6IP. Able to induce its own expression in dental mesenchymal cells and also in the neighboring dental epithelial cells via an MSX1-mediated pathway. The protein is Syndecan-1 of Mesocricetus auratus (Golden hamster).